Reading from the N-terminus, the 274-residue chain is 3-methyl-2-oxobutanoate hydroxymethyltransferase (274 aa).

Positions 50 and 89 each coordinate Mg(2+). Residues 50-51 (DS), Asp89, and Lys119 each bind 3-methyl-2-oxobutanoate. Glu121 provides a ligand contact to Mg(2+). Glu188 acts as the Proton acceptor in catalysis.

The protein belongs to the PanB family. In terms of assembly, homodecamer; pentamer of dimers. The cofactor is Mg(2+).

It localises to the cytoplasm. The catalysed reaction is 3-methyl-2-oxobutanoate + (6R)-5,10-methylene-5,6,7,8-tetrahydrofolate + H2O = 2-dehydropantoate + (6S)-5,6,7,8-tetrahydrofolate. It functions in the pathway cofactor biosynthesis; (R)-pantothenate biosynthesis; (R)-pantoate from 3-methyl-2-oxobutanoate: step 1/2. Catalyzes the reversible reaction in which hydroxymethyl group from 5,10-methylenetetrahydrofolate is transferred onto alpha-ketoisovalerate to form ketopantoate. The protein is 3-methyl-2-oxobutanoate hydroxymethyltransferase of Methylorubrum populi (strain ATCC BAA-705 / NCIMB 13946 / BJ001) (Methylobacterium populi).